A 370-amino-acid polypeptide reads, in one-letter code: Aminomethyltransferase (370 aa).

It belongs to the GcvT family. As to quaternary structure, the glycine cleavage system is composed of four proteins: P, T, L and H.

It catalyses the reaction N(6)-[(R)-S(8)-aminomethyldihydrolipoyl]-L-lysyl-[protein] + (6S)-5,6,7,8-tetrahydrofolate = N(6)-[(R)-dihydrolipoyl]-L-lysyl-[protein] + (6R)-5,10-methylene-5,6,7,8-tetrahydrofolate + NH4(+). In terms of biological role, the glycine cleavage system catalyzes the degradation of glycine. This Prochlorococcus marinus (strain MIT 9515) protein is Aminomethyltransferase.